A 140-amino-acid chain; its full sequence is MAGLPDKDKLIRNFSRCLNWEEKYLYVIELGAQLPPLTEQQRQPDNLISGCQSQVWIAMSTSTEGQVVFAGDSDAAIVKGLVVVVFILYQGLTPQQIIDLDVRPFFADLALSQHLTPSRSQGLEAMIRAIRAKAAVLKAG.

Catalysis depends on cysteine 51, which acts as the Cysteine persulfide intermediate.

The protein belongs to the SufE family. In terms of assembly, homodimer. Interacts with SufS.

The protein resides in the cytoplasm. The protein operates within cofactor biosynthesis; iron-sulfur cluster biosynthesis. In terms of biological role, participates in cysteine desulfuration mediated by SufS. Cysteine desulfuration mobilizes sulfur from L-cysteine to yield L-alanine and constitutes an essential step in sulfur metabolism for biosynthesis of a variety of sulfur-containing biomolecules. Functions as a sulfur acceptor for SufS, by mediating the direct transfer of the sulfur atom from the S-sulfanylcysteine of SufS, an intermediate product of cysteine desulfuration process. The chain is Cysteine desulfuration protein SufE from Yersinia enterocolitica serotype O:8 / biotype 1B (strain NCTC 13174 / 8081).